Here is a 1091-residue protein sequence, read N- to C-terminus: Ubiquitin carboxyl-terminal hydrolase 36 (1091 aa).

Residues 115 to 152 (ANGHDNNGRKLSDHPNQNHNHANPNGHHANPNELPKPK) form a disordered region. Residues 128–146 (HPNQNHNHANPNGHHANPN) show a composition bias toward low complexity. Positions 176–484 (SGMINAGNTC…NAYIMFYELD (309 aa)) constitute a USP domain. Cysteine 185 (nucleophile) is an active-site residue. Histidine 443 serves as the catalytic Proton acceptor. 2 positions are modified to phosphoserine: serine 518 and serine 522. Disordered regions lie at residues 523 to 572 (PAKF…KSPL), 594 to 892 (PTAN…ELLK), 972 to 1007 (QRDL…GYNP), and 1068 to 1091 (LAAG…QQQS). Residues 547–572 (TTIQFKPQHQPSHQQNGVQQSAKSPL) are compositionally biased toward polar residues. Residues 594–612 (PTANGNKSSSNHSNHKSVN) show a composition bias toward low complexity. A compositionally biased stretch (basic and acidic residues) spans 643–652 (KMDDCMDSGK). Residues 653–667 (PKSPVKTPVKTPLKS) are compositionally biased toward low complexity. Threonine 659 and threonine 663 each carry phosphothreonine. A phosphoserine mark is found at serine 673 and serine 675. The segment covering 691-702 (RSSDSSDSEHEP) has biased composition (basic and acidic residues). Polar residues predominate over residues 703-727 (TTSSVQLNGHSKTNGSLSNGSSKST). Serine 749 is modified (phosphoserine). The segment covering 749 to 759 (SEDDDDDEDEP) has biased composition (acidic residues). Positions 769-780 (PQKQSQSQSRSG) are enriched in low complexity. Positions 781–790 (PPSPKTPPSP) are enriched in pro residues. Residue serine 783 is modified to Phosphoserine. Threonine 786 is subject to Phosphothreonine. Serine 789 carries the post-translational modification Phosphoserine. The segment covering 806–821 (DGDDDEDDDDDDDEVV) has biased composition (acidic residues). Residue threonine 829 is modified to Phosphothreonine. 2 stretches are compositionally biased toward polar residues: residues 838–850 (FASS…SPTT) and 863–886 (AIKT…NGGT). Position 847 is a phosphoserine (serine 847). Phosphothreonine is present on threonine 850.

Belongs to the peptidase C19 family. Interacts with atms/PAF1, but not with CycT.

The protein resides in the nucleus. The protein localises to the nucleolus. It catalyses the reaction Thiol-dependent hydrolysis of ester, thioester, amide, peptide and isopeptide bonds formed by the C-terminal Gly of ubiquitin (a 76-residue protein attached to proteins as an intracellular targeting signal).. Required for maintaining multiple types of adult stem cells, including male and female germline, epithelial follicle cell and intestinal stem cells. May function as a transcriptional repressor by continually deubiquiting histone H2B at the promoters of genes critical for cellular differentiation, thereby preventing histone H3 'Lys-4' trimethylation (H3K4). Controls selective autophagy activation by ubiquitinated proteins. The polypeptide is Ubiquitin carboxyl-terminal hydrolase 36 (Usp36) (Drosophila ananassae (Fruit fly)).